A 74-amino-acid polypeptide reads, in one-letter code: Cytochrome c oxidase subunit 2 (74 aa).

At 1-14 the chain is on the mitochondrial intermembrane side; sequence MAHPSQLGLQDAAS. Residues 15–45 traverse the membrane as a helical segment; the sequence is PVMEELLHFHDHALMIVFLISTLVLYIIVAM. Topologically, residues 46 to 74 are mitochondrial matrix; sequence VSTKLTDKYTIDSQEIEIVWTVLPAVILI.

It belongs to the cytochrome c oxidase subunit 2 family. In terms of assembly, component of the cytochrome c oxidase (complex IV, CIV), a multisubunit enzyme composed of 14 subunits. The complex is composed of a catalytic core of 3 subunits MT-CO1, MT-CO2 and MT-CO3, encoded in the mitochondrial DNA, and 11 supernumerary subunits COX4I, COX5A, COX5B, COX6A, COX6B, COX6C, COX7A, COX7B, COX7C, COX8 and NDUFA4, which are encoded in the nuclear genome. The complex exists as a monomer or a dimer and forms supercomplexes (SCs) in the inner mitochondrial membrane with NADH-ubiquinone oxidoreductase (complex I, CI) and ubiquinol-cytochrome c oxidoreductase (cytochrome b-c1 complex, complex III, CIII), resulting in different assemblies (supercomplex SCI(1)III(2)IV(1) and megacomplex MCI(2)III(2)IV(2)). Found in a complex with TMEM177, COA6, COX18, COX20, SCO1 and SCO2. Interacts with TMEM177 in a COX20-dependent manner. Interacts with COX20. Interacts with COX16. The cofactor is Cu cation.

It localises to the mitochondrion inner membrane. The enzyme catalyses 4 Fe(II)-[cytochrome c] + O2 + 8 H(+)(in) = 4 Fe(III)-[cytochrome c] + 2 H2O + 4 H(+)(out). Component of the cytochrome c oxidase, the last enzyme in the mitochondrial electron transport chain which drives oxidative phosphorylation. The respiratory chain contains 3 multisubunit complexes succinate dehydrogenase (complex II, CII), ubiquinol-cytochrome c oxidoreductase (cytochrome b-c1 complex, complex III, CIII) and cytochrome c oxidase (complex IV, CIV), that cooperate to transfer electrons derived from NADH and succinate to molecular oxygen, creating an electrochemical gradient over the inner membrane that drives transmembrane transport and the ATP synthase. Cytochrome c oxidase is the component of the respiratory chain that catalyzes the reduction of oxygen to water. Electrons originating from reduced cytochrome c in the intermembrane space (IMS) are transferred via the dinuclear copper A center (CU(A)) of subunit 2 and heme A of subunit 1 to the active site in subunit 1, a binuclear center (BNC) formed by heme A3 and copper B (CU(B)). The BNC reduces molecular oxygen to 2 water molecules using 4 electrons from cytochrome c in the IMS and 4 protons from the mitochondrial matrix. The protein is Cytochrome c oxidase subunit 2 (mt-co2) of Megalops atlanticus (Tarpon).